A 350-amino-acid polypeptide reads, in one-letter code: WUSCHEL-related homeobox 1 (350 aa).

Positions 72 to 136 form a DNA-binding region, homeobox; WUS-type; sequence MVSSRWNPTP…NHKARERQKR (65 aa). Residues 283–308 are disordered; it reads TNTETCHRNGDDNKDQEQHEDCSNGE.

It belongs to the WUS homeobox family.

The protein resides in the nucleus. In terms of biological role, transcription factor which may be involved in developmental processes. The sequence is that of WUSCHEL-related homeobox 1 (WOX1) from Arabidopsis thaliana (Mouse-ear cress).